Here is a 781-residue protein sequence, read N- to C-terminus: MQFSEAWLRKLVNPALDTTELAHALTMAGLEVEALTAAAPPFNDVVVAEILSAQKHPDADRLRVCQVDIGEAAPATIVCGAPNAAAGLKVPCARPGAKLPGIEIKVAKVRGVESFGMLCSTKELGLEGAADGLMVLPDDAPVGEDLRGWLNLDDTLVTLKLTPNRADCLSLVGIAREVGAITGAEVRIPQASPVAPRIADTVEVTVAASDACSRYLGRVVRGIDAQATTPRWMAERLERGGIRPLLAPIDVTNYVLLELGQPMHAFALSRLSGGIEVRLARAGETLALLSGQTVELSPDMLVIADASGPVALAGIMGGQATSVERATVDVFLEAAFFAPAAIAGRARRLGLSTDSAHRFERGVDFGAIHAAMERATQLLLDICGGQPGPISEVTGSLPRREPIELRLSRLRRVAGVELGADQVIRDLAALGCVVEQADERLVVTPPSFRFDLAIEEDLIEEAVRLFGYDRIPARPPAAPSRMLAQDETRIADDALRQKMVDLDYQEVITYSFVDPAGEQALDPDVRLLTLANPIASQLSVMRTTLWGGLIETLRHNLNRQQERVRIFELGRVYASLAEQPRKLGGLAYGEALPEQWGVPGRRVDFFDVKGDLERLFGQPLDAGRGEHPALHPGQSAALWVDGHRGGWIGALHPRLVQAFDLAAAPVLFELDSEILARRALPRHAGLSRFPQVRRDLAFVLDAGLAAGDLLAALREAAPASIRAIEVFDDYRGKGVDQNQKSLAIRVVMQDTERTLTDRDVDEAVQKLVDAAARRCSATLRA.

The tRNA-binding domain occupies 39–147; that stretch reads APPFNDVVVA…DDAPVGEDLR (109 aa). The B5 domain occupies 398–473; it reads PRREPIELRL…RLFGYDRIPA (76 aa). Mg(2+)-binding residues include aspartate 451, aspartate 457, glutamate 460, and glutamate 461. In terms of domain architecture, FDX-ACB spans 687–780; it reads SRFPQVRRDL…AARRCSATLR (94 aa).

Belongs to the phenylalanyl-tRNA synthetase beta subunit family. Type 1 subfamily. In terms of assembly, tetramer of two alpha and two beta subunits. The cofactor is Mg(2+).

It localises to the cytoplasm. It carries out the reaction tRNA(Phe) + L-phenylalanine + ATP = L-phenylalanyl-tRNA(Phe) + AMP + diphosphate + H(+). The polypeptide is Phenylalanine--tRNA ligase beta subunit (Thiobacillus denitrificans (strain ATCC 25259 / T1)).